We begin with the raw amino-acid sequence, 556 residues long: Set1/Ash2 histone methyltransferase complex subunit ASH2 (556 aa).

The span at 1–19 (MEDSQMDTSSPTESSSEVN) shows a compositional bias: polar residues. The interval 1-27 (MEDSQMDTSSPTESSSEVNFTAEEDKS) is disordered. The segment at 34–90 (AGVCYCGKERNLNIVELLCATCSRWVHETCVSYQLGKGKLLPFITNYVFVCKNCSAS) adopts a PHD-type zinc-finger fold. The Zn(2+) site is built by Cys37, Cys39, Cys52, Cys55, His60, Cys63, Cys84, and Cys87. The disordered stretch occupies residues 216 to 251 (ASLSKNNRQKRKFPGTDSGPTGKKGRPSSDITANVK). A B30.2/SPRY domain is found at 288-510 (SSDWAGKPIP…VSVNFGPAFK (223 aa)).

In terms of assembly, core component of several methyltransferase-containing complexes. Component of the SET1C/COMPASS complex, composed at least of the catalytic subunit Set1, wds/WDR5, Wdr82, Rbbp5, ash2, Cfp1/CXXC1, hcf and Dpy-30L1. Component of the MLL3/4 (Histone-lysine N-methyltransferase/demethylase TRR) complex composed at least of the catalytic subunit trr, ash2, Rbbp5, Dpy-30L1, wds, hcf, ptip, Pa1, Utx, Lpt and Ncoa6. Interacts with hcf. Interacts with trr. As to quaternary structure, interacts (via B30.2/SPRY domain) with sktl; the interaction is direct. In terms of tissue distribution, in larvae and pupae, expressed in imaginal disks, salivary gland and fat body cells. No expression detected in central nervous system (at protein level).

The protein localises to the nucleus. The protein resides in the chromosome. In terms of biological role, transcriptional regulator. Regulates a number of genes involved in wing development including activation of net and bs and repression of rho and kni and controls vein-intervein patterning during wing development. Required for correct expression of a number of homeotic genes including Scr in the first leg imaginal disk and Ubx in the third leg imaginal disk and haltere disks. Required for stabilization of the histone-lysine N-methyltransferase trr and for trimethylation of 'Lys-4' of histone H3. Together with sktl probably plays a role in maintenance of transcriptionally active chromatin through down-regulation of histone H1 hyperphosphorylation. The sequence is that of Set1/Ash2 histone methyltransferase complex subunit ASH2 from Drosophila melanogaster (Fruit fly).